Consider the following 475-residue polypeptide: Aspartyl/glutamyl-tRNA(Asn/Gln) amidotransferase subunit B (475 aa).

The protein belongs to the GatB/GatE family. GatB subfamily. As to quaternary structure, heterotrimer of A, B and C subunits.

It carries out the reaction L-glutamyl-tRNA(Gln) + L-glutamine + ATP + H2O = L-glutaminyl-tRNA(Gln) + L-glutamate + ADP + phosphate + H(+). It catalyses the reaction L-aspartyl-tRNA(Asn) + L-glutamine + ATP + H2O = L-asparaginyl-tRNA(Asn) + L-glutamate + ADP + phosphate + 2 H(+). Allows the formation of correctly charged Asn-tRNA(Asn) or Gln-tRNA(Gln) through the transamidation of misacylated Asp-tRNA(Asn) or Glu-tRNA(Gln) in organisms which lack either or both of asparaginyl-tRNA or glutaminyl-tRNA synthetases. The reaction takes place in the presence of glutamine and ATP through an activated phospho-Asp-tRNA(Asn) or phospho-Glu-tRNA(Gln). The chain is Aspartyl/glutamyl-tRNA(Asn/Gln) amidotransferase subunit B from Pediococcus pentosaceus (strain ATCC 25745 / CCUG 21536 / LMG 10740 / 183-1w).